A 295-amino-acid chain; its full sequence is Mycothiol acetyltransferase (295 aa).

N-acetyltransferase domains are found at residues 5-141 (VEIR…TPLP) and 149-295 (VRLR…MYRR). A 1D-myo-inositol 2-(L-cysteinylamino)-2-deoxy-alpha-D-glucopyranoside-binding site is contributed by Glu35. Residue 76-78 (LVV) participates in acetyl-CoA binding. 1D-myo-inositol 2-(L-cysteinylamino)-2-deoxy-alpha-D-glucopyranoside contacts are provided by Glu176, Lys215, and Glu229. Residues 233 to 235 (VGV) and 240 to 246 (RGTGLGR) contribute to the acetyl-CoA site. Tyr267 is a binding site for 1D-myo-inositol 2-(L-cysteinylamino)-2-deoxy-alpha-D-glucopyranoside. An acetyl-CoA-binding site is contributed by 272–277 (NTAAVR).

Belongs to the acetyltransferase family. MshD subfamily. In terms of assembly, monomer.

It catalyses the reaction 1D-myo-inositol 2-(L-cysteinylamino)-2-deoxy-alpha-D-glucopyranoside + acetyl-CoA = mycothiol + CoA + H(+). Catalyzes the transfer of acetyl from acetyl-CoA to desacetylmycothiol (Cys-GlcN-Ins) to form mycothiol. This is Mycothiol acetyltransferase from Thermobispora bispora (strain ATCC 19993 / DSM 43833 / CBS 139.67 / JCM 10125 / KCTC 9307 / NBRC 14880 / R51).